The following is an 877-amino-acid chain: Potassium transporter 23 (877 aa).

Disordered regions lie at residues 1-60 (MDDD…SLDG) and 72-92 (ASAG…RASS). Residues 1–126 (MDDDDSGIQE…RGAHGHSSKE (126 aa)) are Cytoplasmic-facing. Over residues 12–28 (PAPPPPPPPPPPPPPPL) the composition is skewed to pro residues. Positions 76–86 (GASGGGGGGGP) are enriched in gly residues. Residues 127-147 (ISMLSTVAMAFQTLGVVYGDM) form a helical membrane-spanning segment. Over 148-173 (GTSPLYVFSDVFSKVPIKSEVEILGA) the chain is Extracellular. A helical transmembrane segment spans residues 174-194 (LSLVMYTIALIPFAKYVFIVL). The Cytoplasmic segment spans residues 195–260 (KANDNGEGGT…SLEKNPVFKN (66 aa)). The helical transmembrane segment at 261 to 281 (ILLFLVLMGTSMVIGDGILTP) threads the bilayer. Residues 282–295 (SMSVMSAVSGLQGR) lie on the Extracellular side of the membrane. The helical transmembrane segment at 296 to 316 (VPGFGTDAVVIVSILFLVLLF) threads the bilayer. At 317–325 (SVQRFGTGK) the chain is on the cytoplasmic side. Residues 326-346 (VGFMFAPILALWFINLGTIGI) form a helical membrane-spanning segment. Topologically, residues 347–379 (YNLAKYDISVVRAFNPVYIYLFFQTNGIKAWSA) are extracellular. The chain crosses the membrane as a helical span at residues 380–400 (LGGCVLCITGAEAMFADLGHF). Topologically, residues 401-406 (SVKSIQ) are cytoplasmic. The helical transmembrane segment at 407-427 (VAFTAVVFPCLLIAYMGQAAY) threads the bilayer. At 428–441 (LMKYPFAVERIFYD) the chain is on the extracellular side. A helical transmembrane segment spans residues 442–462 (SVPEILFWPVFVIATLAAMIA). Over 463-498 (SQAMISATFSCIKQAMALGCFPRIKIIHTSKKVMGQ) the chain is Cytoplasmic. A helical transmembrane segment spans residues 499–519 (IYIPVMNWFLMVMCIIIVATF). Residues 520-524 (RSTND) are Extracellular-facing. Residues 525 to 545 (IANAYGIAEVGVMMVSTALVT) form a helical membrane-spanning segment. Topologically, residues 546–555 (LVMLLIWQTN) are cytoplasmic. The chain crosses the membrane as a helical span at residues 556 to 578 (LFLVMCFPVIFGSVEFVYLTAVL). Residues 579 to 583 (SKIQE) are Extracellular-facing. The helical transmembrane segment at 584–604 (GGWLPLAFSSLFLCIMYTWNY) threads the bilayer. At 605 to 877 (GSVLKYQSEM…IMRVGMTYMV (273 aa)) the chain is on the cytoplasmic side.

Belongs to the HAK/KUP transporter (TC 2.A.72.3) family.

The protein resides in the membrane. Its function is as follows. High-affinity potassium transporter. In Oryza sativa subsp. japonica (Rice), this protein is Potassium transporter 23 (HAK23).